We begin with the raw amino-acid sequence, 3392 residues long: Genome polyprotein (3392 aa).

Residues 1–101 (MNNQRKKTGR…LNIMNRRKRS (101 aa)) lie on the Cytoplasmic side of the membrane. Residues 33–74 (FSKGLLSGQGPMKLVMAFIAFLRFLAIPPTAGILARWSSFKK) form a hydrophobic; homodimerization of capsid protein C region. Residues 101–114 (SVTMLLMLLPTALA) constitute a propeptide, ER anchor for the protein C, removed in mature form by serine protease NS3. Residues 102–119 (VTMLLMLLPTALAFHLTT) form a helical membrane-spanning segment. The Extracellular portion of the chain corresponds to 120–242 (RGGEPHMIVS…QIQKVETWAL (123 aa)). N183 carries N-linked (GlcNAc...) asparagine; by host glycosylation. A helical transmembrane segment spans residues 243–260 (RHPGFTVIALFLAHAIGT). A topological domain (cytoplasmic) is located at residue S261. A helical transmembrane segment spans residues 262-280 (ITQKGIIFILLMLVTPSMA). The Extracellular segment spans residues 281 to 725 (MRCVGIGNRD…VHQVFGTAYG (445 aa)). 4 disulfides stabilise this stretch: C283/C310, C340/C401, C354/C385, and C372/C396. N-linked (GlcNAc...) asparagine; by host glycosylation is present at N347. N-linked (GlcNAc...) asparagine; by host glycosylation occurs at N433. 2 disulfide bridges follow: C465-C565 and C582-C613. Positions 726–746 (VLFSGVSWTMKIGIGILLTWL) form an intramembrane region, helical. Topologically, residues 747–752 (GLNSRS) are extracellular. The helical intramembrane region spans 753–775 (TSLSMTCIAVGMVTLYLGVMVQA). Residues 776–1125 (DSGCVINWKG…KEENLVRSMV (350 aa)) are Extracellular-facing. Disulfide bonds link C779–C790, C830–C918, C954–C998, C1055–C1104, C1066–C1088, and C1087–C1091. Residues N905 and N982 are each glycosylated (N-linked (GlcNAc...) asparagine; by host). The chain crosses the membrane as a helical span at residues 1126–1146 (SAGSGEVDSFSLGILCVSIMI). Topologically, residues 1147-1157 (EEVMRSRWSRK) are cytoplasmic. Residues 1158–1178 (MLMTGTLAVFLLLIMGQLTWN) form a helical membrane-spanning segment. The Lumenal segment spans residues 1179 to 1199 (DLIRLCIMVGANASDKMGMGT). The N-linked (GlcNAc...) asparagine; by host glycan is linked to N1190. Residues 1200–1220 (TYLALMATFKMRPMFAVGLLF) form a helical membrane-spanning segment. The Cytoplasmic segment spans residues 1221 to 1289 (RRLTSREVLL…TFIKTTLSLD (69 aa)). A helical membrane pass occupies residues 1290–1310 (YAWKTTAMVLSIVSLFPLCLS). Topologically, residues 1311–1315 (TTSQK) are lumenal. Residues 1316 to 1336 (TTWLPVLLGSFGCKPLTMFLI) traverse the membrane as a helical segment. Residues 1337-1346 (TENEIWGRKS) lie on the Cytoplasmic side of the membrane. Residues 1347 to 1367 (WPLNEGIMAIGIVSILLSSLL) traverse the membrane as a helical segment. The Lumenal segment spans residues 1368 to 1370 (KND). A helical transmembrane segment spans residues 1371–1391 (VPLAGPLIAGGMLIACYVISG). Topologically, residues 1392–1447 (SSADLSLEKAAEVSWEEEAEHSGTSHNILVEVQDDGTMKIKDEERDDTLTILLKAT) are cytoplasmic. Residues 1398–1437 (LEKAAEVSWEEEAEHSGTSHNILVEVQDDGTMKIKDEERD) are interacts with and activates NS3 protease. Residues 1448 to 1468 (LLAVSGVYPMSIPATLFVWYF) constitute an intramembrane region (helical). Over 1469-2148 (WQKKKQRSGV…MEELPDTIET (680 aa)) the chain is Cytoplasmic. In terms of domain architecture, Peptidase S7 spans 1476 to 1653 (SGVLWDTPSP…KASQEGPLPE (178 aa)). Active-site charge relay system; for serine protease NS3 activity residues include H1526, D1550, and S1610. The Helicase ATP-binding domain maps to 1656–1812 (DEVFKKRNLT…QSNAVIQDEE (157 aa)). 1669-1676 (LHPGSGKT) lines the ATP pocket. The short motif at 1760–1763 (DEAH) is the DEAH box element. Residues 1822-1989 (SGYDWITDFP…IIPALFEPER (168 aa)) enclose the Helicase C-terminal domain. Position 1864 is an N6-acetyllysine; by host (K1864). A helical membrane pass occupies residues 2149 to 2169 (LMLLALIAVLTGGVTLFFLSG). The Lumenal segment spans residues 2170–2171 (KG). Residues 2172–2192 (LGKTSIGLLCVTASSALLWMA) constitute an intramembrane region (helical). A topological domain (lumenal) is located at residue S2193. A helical membrane pass occupies residues 2194–2214 (VEPHWIAASIILEFFLMVLLI). At 2215–2229 (PEPDRQRTPQDNQLA) the chain is on the cytoplasmic side. A helical transmembrane segment spans residues 2230 to 2250 (YVVIGLLFMILTVAANEMGLL). The Lumenal segment spans residues 2251-2276 (ETTKKDLGIGHVAAENHQHATILDVD). An intramembrane region (helical) is located at residues 2277 to 2297 (LHPASAWTLYAVATTVITPMM). At 2298–2349 (RHTIENTTANISLTAIANQAAILMGLDKGWPISKMDLGVPLLALGCYSQVNP) the chain is on the lumenal side. N2303 and N2307 each carry an N-linked (GlcNAc...) asparagine; by host glycan. Residues 2350–2370 (LTLTAAVLMLVAHYAIIGPGL) form a helical membrane-spanning segment. Residues 2371 to 2415 (QAKATREAQKRTAAGIMKNPTVDGIVAIDLDPVVYDAKFEKQLGQ) lie on the Cytoplasmic side of the membrane. Residues 2416–2436 (IMLLILCTSQILLMRTTWALC) traverse the membrane as a helical segment. Topologically, residues 2437–2461 (ESITLATGPLTTLWEGSPGKFWNTT) are lumenal. Residue N2459 is glycosylated (N-linked (GlcNAc...) asparagine; by host). The helical transmembrane segment at 2462–2482 (IAVSMANIFRGSYLAGAGLAF) threads the bilayer. Over 2483–3392 (SLMKSLGGGR…NESDPEGALW (910 aa)) the chain is Cytoplasmic. The 262-residue stretch at 2495–2756 (TGAQGETLGE…DVDLGAGTRH (262 aa)) folds into the mRNA cap 0-1 NS5-type MT domain. S-adenosyl-L-methionine contacts are provided by S2549, G2579, W2580, T2597, K2598, D2624, V2625, I2640, and Y2711. In terms of domain architecture, RdRp catalytic spans 3021–3170 (NMYADDTAGW…PIDDRFATAL (150 aa)).

It in the N-terminal section; belongs to the class I-like SAM-binding methyltransferase superfamily. mRNA cap 0-1 NS5-type methyltransferase family. In terms of assembly, capsid protein C: Homodimer. Interacts (via N-terminus) with host EXOC1 (via C-terminus); this interaction results in EXOC1 degradation through the proteasome degradation pathway. As to quaternary structure, forms heterodimers with envelope protein E in the endoplasmic reticulum and Golgi. Homodimer; in the endoplasmic reticulum and Golgi. Interacts with protein prM. Interacts with non-structural protein 1. In terms of assembly, homodimer; Homohexamer when secreted. Interacts with envelope protein E. As to quaternary structure, interacts (via N-terminus) with serine protease NS3. Forms a heterodimer with serine protease NS3. May form homooligomers. In terms of assembly, forms a heterodimer with NS2B. Interacts with NS4B. Interacts with unphosphorylated RNA-directed RNA polymerase NS5; this interaction stimulates RNA-directed RNA polymerase NS5 guanylyltransferase activity. Interacts with host SHFL. As to quaternary structure, interacts with host MAVS; this interaction inhibits the synthesis of IFN-beta. Interacts with host SHFL. Interacts with host AUP1; the interaction occurs in the presence of Dengue virus NS4B and induces lipophagy which facilitates production of virus progeny particles. Interacts with serine protease NS3. In terms of assembly, homodimer. Interacts with host STAT2; this interaction inhibits the phosphorylation of the latter, and, when all viral proteins are present (polyprotein), targets STAT2 for degradation. Interacts with serine protease NS3. Specific enzymatic cleavages in vivo yield mature proteins. Cleavages in the lumen of endoplasmic reticulum are performed by host signal peptidase, wereas cleavages in the cytoplasmic side are performed by the Serine protease NS3. Signal cleavage at the 2K-4B site requires a prior NS3 protease-mediated cleavage at the 4A-2K site. In terms of processing, a C-terminally truncated form of non-structural protein 2A, results from partial cleavage by NS3. Post-translationally, cleaved in post-Golgi vesicles by a host furin, releasing the mature small envelope protein M, and peptide pr. This cleavage is incomplete as up to 30% of viral particles still carry uncleaved prM. The excreted form is glycosylated and this is required for efficient secretion of the protein from infected cells. In terms of processing, phosphorylated on serines residues. This phosphorylation may trigger NS5 nuclear localization. Post-translationally, N-glycosylated. Acetylated by host KAT5. Acetylation modulates NS3 RNA-binding and unwinding activities and plays an important positive role for viral replication.

It is found in the virion. The protein resides in the host nucleus. The protein localises to the secreted. It localises to the virion membrane. Its subcellular location is the host endoplasmic reticulum membrane. It is found in the host mitochondrion. The catalysed reaction is Selective hydrolysis of -Xaa-Xaa-|-Yaa- bonds in which each of the Xaa can be either Arg or Lys and Yaa can be either Ser or Ala.. It carries out the reaction RNA(n) + a ribonucleoside 5'-triphosphate = RNA(n+1) + diphosphate. It catalyses the reaction a ribonucleoside 5'-triphosphate + H2O = a ribonucleoside 5'-diphosphate + phosphate + H(+). The enzyme catalyses ATP + H2O = ADP + phosphate + H(+). The catalysed reaction is a 5'-end (5'-triphosphoguanosine)-ribonucleoside in mRNA + S-adenosyl-L-methionine = a 5'-end (N(7)-methyl 5'-triphosphoguanosine)-ribonucleoside in mRNA + S-adenosyl-L-homocysteine. It carries out the reaction a 5'-end (N(7)-methyl 5'-triphosphoguanosine)-ribonucleoside in mRNA + S-adenosyl-L-methionine = a 5'-end (N(7)-methyl 5'-triphosphoguanosine)-(2'-O-methyl-ribonucleoside) in mRNA + S-adenosyl-L-homocysteine + H(+). Functionally, plays a role in virus budding by binding to membrane and gathering the viral RNA into a nucleocapsid that forms the core of a mature virus particle. During virus entry, may induce genome penetration in host cytoplasm after hemifusion induced by surface proteins. Can migrate tot cell nucleus where it modulates host functions. Its function is as follows. Prevents premature fusion activity of envelope proteins in trans Golgi by binding to envelope protein E at pH6.0. After virion release in extracellular space gets dissociated from E dimers. Acts as a chaperone for envelope protein E during intracellular virion assembly by masking and inactivating envelope protein E fusion peptide. prM is the only viral peptide matured by host furin in the trans-Golgi network. Presumably to avoid catastrophic activation of the viral fusion activity in acidic GolGi compartment prior to virion release. prM-E cleavage is ineficient, and many virions are only partially matured. These uncleaved prM would play a role in immune evasion. In terms of biological role, may play a role in virus budding. Exerts cytotoxic effects by activating a mitochondrial apoptotic pathway through M extodomain. May display a viroporin activity. Functionally, binds to host cell surface receptor and mediates fusion between viral and cellular membranes. Envelope protein is synthesized in the endoplasmic reticulum in the form of heterodimer with protein prM. They play a role in virion budding in the ER, and the newly formed immature particle is covered with 60 spikes composed of heterodimer between precursor prM and envelope protein E. The virion is transported to the Golgi apparatus where the low pH causes dissociation of PrM-E heterodimers and formation of E homodimers. prM-E cleavage is ineficient, and many virions are only partially matured. These uncleaved prM would play a role in immune evasion. Its function is as follows. Involved in immune evasion, pathogenesis and viral replication. Once cleaved off the polyprotein, is targeted to three destinations: the viral replication cycle, the plasma membrane and the extracellular compartment. May play a role in viral genome replication. Assist membrane bending and envelopment of genomic RNA at the endoplasmic reticulum. Excreted as a hexameric lipoparticle that plays a role against host immune response. Component of the viral RNA replication complex that functions in virion assembly and antagonizes the host immune response. In terms of biological role, required cofactor for the serine protease function of NS3. May have membrane-destabilizing activity and form viroporins. Functionally, displays three enzymatic activities: serine protease, NTPase and RNA helicase. NS3 serine protease, in association with NS2B, performs its autocleavage and cleaves the polyprotein at dibasic sites in the cytoplasm: C-prM, NS2A-NS2B, NS2B-NS3, NS3-NS4A, NS4A-2K and NS4B-NS5. NS3 RNA helicase binds RNA and unwinds dsRNA in the 3' to 5' direction. Its function is as follows. Regulates the ATPase activity of the NS3 helicase activity. NS4A allows NS3 helicase to conserve energy during unwinding. Plays a role in the inhibition of the host innate immune response. Interacts with host MAVS and thereby prevents the interaction between RIGI and MAVS. In turn, IFN-beta production is impaired. Interacts with host AUP1 which mediates induction of lipophagy in host cells and facilitates production of virus progeny particles. Functions as a signal peptide for NS4B and is required for the interferon antagonism activity of the latter. In terms of biological role, inhibits interferon (IFN)-induced host STAT1 phosphorylation and nuclear translocation, thereby preventing the establishment of cellular antiviral state by blocking the IFN-alpha/beta pathway. Functionally, replicates the viral (+) and (-) genome, and performs the capping of genomes in the cytoplasm. NS5 methylates viral RNA cap at guanine N-7 and ribose 2'-O positions. Besides its role in RNA genome replication, also prevents the establishment of cellular antiviral state by blocking the interferon-alpha/beta (IFN-alpha/beta) signaling pathway. Inhibits host TYK2 and STAT2 phosphorylation, thereby preventing activation of JAK-STAT signaling pathway. This is Genome polyprotein from Dengue virus type 1 (strain Brazil/97-11/1997) (DENV-1).